Consider the following 226-residue polypeptide: uncharacterized protein (226 aa).

The chain crosses the membrane as a helical span at residues 5 to 25; that stretch reads IKTVSFAAAAILVVIICTFLI.

Its subcellular location is the cell membrane. This is an uncharacterized protein from Bacillus subtilis (strain 168).